A 212-amino-acid polypeptide reads, in one-letter code: Translation initiation factor IF-3 (212 aa).

The tract at residues 171-212 is disordered; the sequence is PKSASKKGHTPPKTQVEASKQANESAETEEEKKRCHPTKPVL. Positions 182 to 195 are enriched in polar residues; it reads PKTQVEASKQANES.

The protein belongs to the IF-3 family. As to quaternary structure, monomer.

The protein localises to the cytoplasm. Its function is as follows. IF-3 binds to the 30S ribosomal subunit and shifts the equilibrium between 70S ribosomes and their 50S and 30S subunits in favor of the free subunits, thus enhancing the availability of 30S subunits on which protein synthesis initiation begins. The sequence is that of Translation initiation factor IF-3 from Porphyromonas gingivalis (strain ATCC 33277 / DSM 20709 / CIP 103683 / JCM 12257 / NCTC 11834 / 2561).